A 96-amino-acid chain; its full sequence is Putative pterin-4-alpha-carbinolamine dehydratase (96 aa).

The protein belongs to the pterin-4-alpha-carbinolamine dehydratase family.

The catalysed reaction is (4aS,6R)-4a-hydroxy-L-erythro-5,6,7,8-tetrahydrobiopterin = (6R)-L-erythro-6,7-dihydrobiopterin + H2O. This Paraburkholderia xenovorans (strain LB400) protein is Putative pterin-4-alpha-carbinolamine dehydratase.